Here is a 253-residue protein sequence, read N- to C-terminus: MYILVTNDDGYQSPGLAALRAVLSEIGEVAVVAPDRNWSAAGHYRKLFDPLRAWEGTLSDGSPALICDGTPADCVALAILGLLDRKPDLVVSGINLGANLGTDLLYSGTVAAAMEGIVFGVPGLAVSQIRPKDGQWDFRAAQVAVRRLVMLIRERGLPPELLLNLNIPAVTPETLRGIKVSRLGRRVYRDELVVRYDPRGRPYYWIDGAEPEDHCEEGTDIAAISEGYASLTPVQMDLTSHRWLEELRRWEWE.

A divalent metal cation-binding residues include aspartate 8, aspartate 9, serine 39, and asparagine 95.

Belongs to the SurE nucleotidase family. A divalent metal cation serves as cofactor.

It localises to the cytoplasm. It carries out the reaction a ribonucleoside 5'-phosphate + H2O = a ribonucleoside + phosphate. Its function is as follows. Nucleotidase that shows phosphatase activity on nucleoside 5'-monophosphates. This Chloroflexus aggregans (strain MD-66 / DSM 9485) protein is 5'-nucleotidase SurE.